Here is a 580-residue protein sequence, read N- to C-terminus: Arginine--tRNA ligase (580 aa).

The short motif at 123–133 (PNLAKEMHVGH) is the 'HIGH' region element.

It belongs to the class-I aminoacyl-tRNA synthetase family. Monomer.

The protein localises to the cytoplasm. It carries out the reaction tRNA(Arg) + L-arginine + ATP = L-arginyl-tRNA(Arg) + AMP + diphosphate. The chain is Arginine--tRNA ligase from Pseudoalteromonas translucida (strain TAC 125).